The primary structure comprises 76 residues: Membrane protein UL43 homolog (76 aa).

The next 2 helical transmembrane spans lie at 7–27 (AVCV…SLAF) and 54–74 (ISRW…ATII).

It belongs to the alphaherpesvirinae HHV-1 UL43 family.

Its subcellular location is the membrane. The protein is Membrane protein UL43 homolog of Equus caballus (Horse).